A 394-amino-acid chain; its full sequence is 1-deoxy-D-xylulose 5-phosphate reductoisomerase (394 aa).

Residues Thr-14, Gly-15, Ser-16, Ile-17, Gly-40, and Asn-128 each contribute to the NADPH site. Residue Lys-129 participates in 1-deoxy-D-xylulose 5-phosphate binding. Position 130 (Glu-130) interacts with NADPH. Position 154 (Asp-154) interacts with Mn(2+). 1-deoxy-D-xylulose 5-phosphate contacts are provided by Ser-155, Glu-156, Ser-180, and His-203. A Mn(2+)-binding site is contributed by Glu-156. Gly-209 is a binding site for NADPH. Residues Ser-216, Asn-221, Lys-222, and Glu-225 each coordinate 1-deoxy-D-xylulose 5-phosphate. Residue Glu-225 coordinates Mn(2+).

Belongs to the DXR family. It depends on Mg(2+) as a cofactor. Requires Mn(2+) as cofactor.

The enzyme catalyses 2-C-methyl-D-erythritol 4-phosphate + NADP(+) = 1-deoxy-D-xylulose 5-phosphate + NADPH + H(+). Its pathway is isoprenoid biosynthesis; isopentenyl diphosphate biosynthesis via DXP pathway; isopentenyl diphosphate from 1-deoxy-D-xylulose 5-phosphate: step 1/6. Catalyzes the NADPH-dependent rearrangement and reduction of 1-deoxy-D-xylulose-5-phosphate (DXP) to 2-C-methyl-D-erythritol 4-phosphate (MEP). The chain is 1-deoxy-D-xylulose 5-phosphate reductoisomerase from Xylella fastidiosa (strain M23).